The sequence spans 97 residues: U-scoloptoxin(10)-Sa2a (97 aa).

The signal sequence occupies residues 1–23 (MNKSMLIFFTILFLTYIIEEKEA).

Belongs to the scoloptoxin-10 family. Post-translationally, contains 3 disulfide bonds. In terms of tissue distribution, expressed by the venom gland.

It is found in the secreted. The protein is U-scoloptoxin(10)-Sa2a of Scolopendra alternans (Florida Keys giant centipede).